A 372-amino-acid polypeptide reads, in one-letter code: Germination protease (372 aa).

The propeptide occupies 1 to 15 (MVKELNLEQYNVRTD).

Belongs to the peptidase A25 family. Homotetramer. Post-translationally, autoproteolytically processed. The inactive tetrameric zymogen termed p46 autoprocesses to a smaller form termed p41, which is active only during spore germination.

It carries out the reaction Endopeptidase action with P4 Glu or Asp, P1 preferably Glu &gt; Asp, P1' hydrophobic and P2' Ala.. Its function is as follows. Initiates the rapid degradation of small, acid-soluble proteins during spore germination. The chain is Germination protease from Halalkalibacterium halodurans (strain ATCC BAA-125 / DSM 18197 / FERM 7344 / JCM 9153 / C-125) (Bacillus halodurans).